The sequence spans 400 residues: Imidazolonepropionase (400 aa).

His70 and His72 together coordinate Fe(3+). Residues His70 and His72 each coordinate Zn(2+). 4-imidazolone-5-propanoate contacts are provided by Arg79, Tyr142, and His175. An N-formimidoyl-L-glutamate-binding site is contributed by Tyr142. His239 contributes to the Fe(3+) binding site. His239 is a Zn(2+) binding site. Gln242 provides a ligand contact to 4-imidazolone-5-propanoate. Fe(3+) is bound at residue Asp314. Asp314 serves as a coordination point for Zn(2+). Asn316 and Gly318 together coordinate N-formimidoyl-L-glutamate. Residue Thr319 coordinates 4-imidazolone-5-propanoate.

The protein belongs to the metallo-dependent hydrolases superfamily. HutI family. The cofactor is Zn(2+). Requires Fe(3+) as cofactor.

The protein localises to the cytoplasm. It catalyses the reaction 4-imidazolone-5-propanoate + H2O = N-formimidoyl-L-glutamate. The protein operates within amino-acid degradation; L-histidine degradation into L-glutamate; N-formimidoyl-L-glutamate from L-histidine: step 3/3. Functionally, catalyzes the hydrolytic cleavage of the carbon-nitrogen bond in imidazolone-5-propanoate to yield N-formimidoyl-L-glutamate. It is the third step in the universal histidine degradation pathway. This Methylobacterium sp. (strain 4-46) protein is Imidazolonepropionase.